The following is an 89-amino-acid chain: Small ribosomal subunit protein uS15 (89 aa).

Belongs to the universal ribosomal protein uS15 family. Part of the 30S ribosomal subunit. Forms a bridge to the 50S subunit in the 70S ribosome, contacting the 23S rRNA.

Its function is as follows. One of the primary rRNA binding proteins, it binds directly to 16S rRNA where it helps nucleate assembly of the platform of the 30S subunit by binding and bridging several RNA helices of the 16S rRNA. In terms of biological role, forms an intersubunit bridge (bridge B4) with the 23S rRNA of the 50S subunit in the ribosome. The polypeptide is Small ribosomal subunit protein uS15 (Burkholderia mallei (strain NCTC 10247)).